A 440-amino-acid chain; its full sequence is GTPase Der (440 aa).

2 EngA-type G domains span residues 4–168 and 177–352; these read PIVA…NPED and IKVA…NQNA. Residues 10-17, 57-61, 120-123, 183-190, 230-234, and 295-298 each bind GTP; these read GRPNVGKS, DTGGI, NKVD, GKPNVGKS, DTAGI, and NKWD. A KH-like domain is found at 353–437; the sequence is MRIPTGALNE…PIRFILREKT (85 aa).

This sequence belongs to the TRAFAC class TrmE-Era-EngA-EngB-Septin-like GTPase superfamily. EngA (Der) GTPase family. Associates with the 50S ribosomal subunit.

In terms of biological role, GTPase that plays an essential role in the late steps of ribosome biogenesis. This is GTPase Der from Alkaliphilus oremlandii (strain OhILAs) (Clostridium oremlandii (strain OhILAs)).